Reading from the N-terminus, the 100-residue chain is Putative pterin-4-alpha-carbinolamine dehydratase (100 aa).

Belongs to the pterin-4-alpha-carbinolamine dehydratase family.

It catalyses the reaction (4aS,6R)-4a-hydroxy-L-erythro-5,6,7,8-tetrahydrobiopterin = (6R)-L-erythro-6,7-dihydrobiopterin + H2O. In Afipia carboxidovorans (strain ATCC 49405 / DSM 1227 / KCTC 32145 / OM5) (Oligotropha carboxidovorans), this protein is Putative pterin-4-alpha-carbinolamine dehydratase.